The chain runs to 269 residues: Hemin import ATP-binding protein HmuV (269 aa).

In terms of domain architecture, ABC transporter spans 2 to 242; sequence LEVIHTGLNI…AMVEACFDLP (241 aa). ATP is bound at residue 34 to 41; that stretch reads GPNGAGKS.

This sequence belongs to the ABC transporter superfamily. Heme (hemin) importer (TC 3.A.1.14.5) family. The complex is composed of two ATP-binding proteins (HmuV), two transmembrane proteins (HmuU) and a solute-binding protein (HmuT).

It localises to the cell inner membrane. Part of the ABC transporter complex HmuTUV involved in hemin import. Responsible for energy coupling to the transport system. This chain is Hemin import ATP-binding protein HmuV, found in Methylobacillus flagellatus (strain ATCC 51484 / DSM 6875 / VKM B-1610 / KT).